The chain runs to 515 residues: Glucose-6-phosphate 1-dehydrogenase (515 aa).

Residues arginine 53 and lysine 160 each coordinate NADP(+). The substrate site is built by histidine 190, lysine 194, glutamate 228, and aspartate 247. The active-site Proton acceptor is histidine 252. Lysine 352 lines the substrate pocket.

Belongs to the glucose-6-phosphate dehydrogenase family.

It catalyses the reaction D-glucose 6-phosphate + NADP(+) = 6-phospho-D-glucono-1,5-lactone + NADPH + H(+). It functions in the pathway carbohydrate degradation; pentose phosphate pathway; D-ribulose 5-phosphate from D-glucose 6-phosphate (oxidative stage): step 1/3. Its function is as follows. Catalyzes the oxidation of glucose 6-phosphate to 6-phosphogluconolactone. This Treponema pallidum (strain Nichols) protein is Glucose-6-phosphate 1-dehydrogenase.